The sequence spans 64 residues: Alpha-conotoxin CnIC (64 aa).

The N-terminal stretch at 1 to 21 (MGMRMMFTVFLLVVLTTTVVS) is a signal peptide. Residues 22–47 (FPSDSASDVRDDEAKDERSDMYKSKR) constitute a propeptide that is removed on maturation. Asn-48 is subject to Deamidated asparagine; in CnIH; partial. Cystine bridges form between Cys-51-Cys-56 and Cys-52-Cys-62. At Cys-62 the chain carries Cysteine amide.

Belongs to the conotoxin A superfamily. As to expression, expressed by the venom duct.

The protein localises to the secreted. Alpha-conotoxins act on postsynaptic membranes, they bind to the nicotinic acetylcholine receptors (nAChR) and thus inhibit them. This is Alpha-conotoxin CnIC from Conus consors (Singed cone).